A 70-amino-acid polypeptide reads, in one-letter code: Large ribosomal subunit protein bL31 (70 aa).

Zn(2+)-binding residues include C16, C18, C36, and C39.

The protein belongs to the bacterial ribosomal protein bL31 family. Type A subfamily. As to quaternary structure, part of the 50S ribosomal subunit. Requires Zn(2+) as cofactor.

In terms of biological role, binds the 23S rRNA. In Fervidobacterium nodosum (strain ATCC 35602 / DSM 5306 / Rt17-B1), this protein is Large ribosomal subunit protein bL31.